The chain runs to 177 residues: Putative pre-16S rRNA nuclease (177 aa).

Residues 1–20 are disordered; that stretch reads MVATQQGPDRPGIDDPGRGR.

This sequence belongs to the YqgF nuclease family.

It localises to the cytoplasm. Could be a nuclease involved in processing of the 5'-end of pre-16S rRNA. The chain is Putative pre-16S rRNA nuclease from Rhodococcus erythropolis (strain PR4 / NBRC 100887).